A 615-amino-acid chain; its full sequence is MQLVPTDDPDEKIGRTSNGMQNATLPIDGPVNTEPKDPAREQWSGKLDFLLSVVGFAVDLGNIWRFPYLCFKNGGGVFLIPYSIMVLLTGVPLFYMELCLGQYYRKGAITTWGRICPLFKGIGYCVILTAFYVDFFYNVILAWGLHYLYTSFSFNLPWASCNNSYNSPACYEPHWSEDGTAMCRSANQSVSAEKISAAEEYFYKGFLGLHEANAPNSHVIRSVTDLGNVRWDIALSLFVVYLICYFSMWKGIHTSGKVVWFTALFPYVVLGILFIRGVTLPGWQNGIEYYLRPNFEMLKRPSVWQDAATQVFFSLGPGFGVLMAYSSYNDFHNNVYVDALFTSFINCATSFLSGFVIFSVLGYMSCKSGKPIEAVAQEGPGLVFVVYPEALSTMPYAPFWSVLFFLMLMTLGLDSSFGGSEAIITGLSDEFPILKKNREVFVGCLFAFYMVIGIAMCTEGGILIMEWLIIYGTTWGLLIAVFCEAMVIAYIYGLRQFVHDVKEMMGFRPGNYWKFCWSCAAPFILLSMITSNFINYQALTYQDYTYPTAANVIGIIFALSGASFIPLVGIYKFVNARGNTISEKWQRVTMPYRKRPNQTEYIPIPTTQPHSDIML.

The tract at residues 1-39 is disordered; the sequence is MQLVPTDDPDEKIGRTSNGMQNATLPIDGPVNTEPKDPA. Over 1–46 the chain is Cytoplasmic; sequence MQLVPTDDPDEKIGRTSNGMQNATLPIDGPVNTEPKDPAREQWSGK. Residues 15–24 are compositionally biased toward polar residues; the sequence is RTSNGMQNAT. A helical membrane pass occupies residues 47-72; the sequence is LDFLLSVVGFAVDLGNIWRFPYLCFK. G55, A57, V58, and N62 together coordinate Na(+). At 73–76 the chain is on the extracellular side; it reads NGGG. The chain crosses the membrane as a helical span at residues 77–100; that stretch reads VFLIPYSIMVLLTGVPLFYMELCL. Residues 101–120 are Cytoplasmic-facing; the sequence is GQYYRKGAITTWGRICPLFK. A helical transmembrane segment spans residues 121–151; it reads GIGYCVILTAFYVDFFYNVILAWGLHYLYTS. Over 152–229 the chain is Extracellular; that stretch reads FSFNLPWASC…IRSVTDLGNV (78 aa). C161 and C170 are oxidised to a cystine. Residues N162 and N187 are each glycosylated (N-linked (GlcNAc...) asparagine). Residues 230 to 250 form a helical membrane-spanning segment; sequence RWDIALSLFVVYLICYFSMWK. At 251-253 the chain is on the cytoplasmic side; that stretch reads GIH. The chain crosses the membrane as a helical span at residues 254–278; it reads TSGKVVWFTALFPYVVLGILFIRGV. The Extracellular segment spans residues 279-302; that stretch reads TLPGWQNGIEYYLRPNFEMLKRPS. The helical transmembrane segment at 303–328 threads the bilayer; it reads VWQDAATQVFFSLGPGFGVLMAYSSY. S314 is a Na(+) binding site. The Cytoplasmic segment spans residues 329 to 334; it reads NDFHNN. Residues 335-358 form a helical membrane-spanning segment; sequence VYVDALFTSFINCATSFLSGFVIF. N346 is a Na(+) binding site. The Extracellular portion of the chain corresponds to 359-398; the sequence is SVLGYMSCKSGKPIEAVAQEGPGLVFVVYPEALSTMPYAP. A helical transmembrane segment spans residues 399–424; that stretch reads FWSVLFFLMLMTLGLDSSFGGSEAII. The Na(+) site is built by L411, D414, and S415. Residues 425-439 lie on the Cytoplasmic side of the membrane; sequence TGLSDEFPILKKNRE. A helical transmembrane segment spans residues 440–460; it reads VFVGCLFAFYMVIGIAMCTEG. Residue G461 is a topological domain, extracellular. Residues 462–488 traverse the membrane as a helical segment; that stretch reads ILIMEWLIIYGTTWGLLIAVFCEAMVI. At 489 to 518 the chain is on the cytoplasmic side; it reads AYIYGLRQFVHDVKEMMGFRPGNYWKFCWS. Residues 519-541 form a helical membrane-spanning segment; that stretch reads CAAPFILLSMITSNFINYQALTY. The Extracellular portion of the chain corresponds to 542-544; sequence QDY. A helical transmembrane segment spans residues 545–565; that stretch reads TYPTAANVIGIIFALSGASFI. Residues 566–615 are Cytoplasmic-facing; sequence PLVGIYKFVNARGNTISEKWQRVTMPYRKRPNQTEYIPIPTTQPHSDIML.

This sequence belongs to the sodium:neurotransmitter symporter (SNF) (TC 2.A.22) family.

The protein resides in the cell membrane. Functionally, dopamine transporter. Terminates the action of dopamine by its high affinity sodium-dependent reuptake into presynaptic terminals. Plays a role in the learned avoidance behavior of animals exposed to food that induces mitochondrial stress. In Caenorhabditis elegans, this protein is Sodium-dependent dopamine transporter.